Here is a 727-residue protein sequence, read N- to C-terminus: Pentatricopeptide repeat-containing protein At2g33680 (727 aa).

PPR repeat units lie at residues 13 to 47 (HTST…GAST), 48 to 78 (CIQH…IICK), 79 to 116 (DVVS…DILP), 117 to 150 (NAYT…MSSF), 152 to 182 (DIYV…MPER), 183 to 213 (NTYT…FLRE), 220 to 254 (SDYV…GLLG), 255 to 285 (FVAL…SGDR), 286 to 320 (NSIT…GIKP), 321 to 355 (SEYT…GFER), 356 to 386 (HLFA…LQER), 387 to 421 (DVAL…GIIP), 422 to 456 (NDPT…GFGL), 457 to 487 (EVPI…TPNK), 488 to 522 (DVVS…GMEP), 523 to 553 (DDVT…MSDQ), and 559 to 593 (KVDH…HGLC). The segment at 594-669 (LWRILLSACK…EVGCSWIELK (76 aa)) is type E motif. Residues 670–700 (NQYHVFVVGDTMHPMIEETKDLVCLVSRQMI) form a type E(+) motif region.

The protein belongs to the PPR family. PCMP-E subfamily.

In Arabidopsis thaliana (Mouse-ear cress), this protein is Pentatricopeptide repeat-containing protein At2g33680 (PCMP-E19).